A 357-amino-acid polypeptide reads, in one-letter code: Histidinol-phosphate aminotransferase 2 (357 aa).

Lysine 215 bears the N6-(pyridoxal phosphate)lysine mark.

The protein belongs to the class-II pyridoxal-phosphate-dependent aminotransferase family. Histidinol-phosphate aminotransferase subfamily. Homodimer. Requires pyridoxal 5'-phosphate as cofactor.

It catalyses the reaction L-histidinol phosphate + 2-oxoglutarate = 3-(imidazol-4-yl)-2-oxopropyl phosphate + L-glutamate. The protein operates within amino-acid biosynthesis; L-histidine biosynthesis; L-histidine from 5-phospho-alpha-D-ribose 1-diphosphate: step 7/9. The chain is Histidinol-phosphate aminotransferase 2 from Thiobacillus denitrificans (strain ATCC 25259 / T1).